Here is a 559-residue protein sequence, read N- to C-terminus: Urocanate hydratase (559 aa).

Residues 54–55 (GG), Gln-132, 178–180 (GMG), Glu-198, Arg-203, 244–245 (NA), 265–269 (QTSAH), 275–276 (YL), and Tyr-324 each bind NAD(+). Cys-412 is an active-site residue. Gly-494 lines the NAD(+) pocket.

This sequence belongs to the urocanase family. It depends on NAD(+) as a cofactor.

The protein resides in the cytoplasm. It carries out the reaction 4-imidazolone-5-propanoate = trans-urocanate + H2O. It functions in the pathway amino-acid degradation; L-histidine degradation into L-glutamate; N-formimidoyl-L-glutamate from L-histidine: step 2/3. Catalyzes the conversion of urocanate to 4-imidazolone-5-propionate. The sequence is that of Urocanate hydratase from Photorhabdus laumondii subsp. laumondii (strain DSM 15139 / CIP 105565 / TT01) (Photorhabdus luminescens subsp. laumondii).